The chain runs to 130 residues: Ribonuclease P protein component 2 (130 aa).

This sequence belongs to the eukaryotic/archaeal RNase P protein component 2 family. As to quaternary structure, consists of a catalytic RNA component and at least 4-5 protein subunits.

It localises to the cytoplasm. It carries out the reaction Endonucleolytic cleavage of RNA, removing 5'-extranucleotides from tRNA precursor.. Part of ribonuclease P, a protein complex that generates mature tRNA molecules by cleaving their 5'-ends. The polypeptide is Ribonuclease P protein component 2 (Methanococcus vannielii (strain ATCC 35089 / DSM 1224 / JCM 13029 / OCM 148 / SB)).